Here is a 73-residue protein sequence, read N- to C-terminus: Maltose-binding periplasmic protein (73 aa).

A signal peptide spans 1–30 (MMTKTNLKMGARTLALSVLATLVLSASALA).

Belongs to the bacterial solute-binding protein 1 family.

It localises to the periplasm. Functionally, involved in the high-affinity maltose membrane transport system. Initial receptor for the active transport of and chemotaxis toward maltooligosaccharides. The chain is Maltose-binding periplasmic protein (malE) from Photorhabdus luminescens (Xenorhabdus luminescens).